The sequence spans 165 residues: 3-hydroxyacyl-[acyl-carrier-protein] dehydratase FabZ (165 aa).

Residue H64 is part of the active site.

This sequence belongs to the thioester dehydratase family. FabZ subfamily.

The protein resides in the cytoplasm. The catalysed reaction is a (3R)-hydroxyacyl-[ACP] = a (2E)-enoyl-[ACP] + H2O. Its function is as follows. Involved in unsaturated fatty acids biosynthesis. Catalyzes the dehydration of short chain beta-hydroxyacyl-ACPs and long chain saturated and unsaturated beta-hydroxyacyl-ACPs. This is 3-hydroxyacyl-[acyl-carrier-protein] dehydratase FabZ from Acidiphilium cryptum (strain JF-5).